Here is a 38-residue protein sequence, read N- to C-terminus: SAAADPLIVELPNGKVRGRDNEGYYEAEGIPRAEPPVG.

The tract at residues 1–38 (SAAADPLIVELPNGKVRGRDNEGYYEAEGIPRAEPPVG) is disordered.

This sequence belongs to the type-B carboxylesterase/lipase family.

It catalyses the reaction a carboxylic ester + H2O = an alcohol + a carboxylate + H(+). This Drosophila mojavensis (Fruit fly) protein is Esterase-5 (Est-5).